A 426-amino-acid polypeptide reads, in one-letter code: Histidine--tRNA ligase (426 aa).

This sequence belongs to the class-II aminoacyl-tRNA synthetase family. In terms of assembly, homodimer.

Its subcellular location is the cytoplasm. It catalyses the reaction tRNA(His) + L-histidine + ATP = L-histidyl-tRNA(His) + AMP + diphosphate + H(+). The polypeptide is Histidine--tRNA ligase (Microcystis aeruginosa (strain NIES-843 / IAM M-2473)).